The following is a 59-amino-acid chain: Small ribosomal subunit protein bS21A (59 aa).

This sequence belongs to the bacterial ribosomal protein bS21 family.

The polypeptide is Small ribosomal subunit protein bS21A (Gloeobacter violaceus (strain ATCC 29082 / PCC 7421)).